A 243-amino-acid polypeptide reads, in one-letter code: ABC transporter arginine-binding protein 1 (243 aa).

The signal sequence occupies residues 1–19 (MKKLVLAALLASFTFGASA).

It belongs to the bacterial solute-binding protein 3 family. The complex is composed of two ATP-binding proteins (ArtP), two transmembrane proteins (ArtM and ArtQ) and two solute-binding proteins (ArtJ and ArtI).

It is found in the periplasm. Functionally, part of the ABC transporter complex ArtPIQMJ involved in arginine transport. Binds L-arginine with high affinity. This chain is ABC transporter arginine-binding protein 1 (artJ), found in Escherichia coli (strain K12).